Reading from the N-terminus, the 149-residue chain is MAFHSLLLLCLAGLAFVSETAAVHHESEHSKCPLMVKVLDAVRGRPAVNVDVKVFKKTEEQTWELFAAGKTNDNGEIHELTTDDKFGEGLYKVEFDTISYWKALGVSPFHEYADVVFTANDAGHRHYTIAAQLSPYSFSTTAIVSNPTE.

The first 22 residues, 1-22, serve as a signal peptide directing secretion; that stretch reads MAFHSLLLLCLAGLAFVSETAA. A Sulfocysteine modification is found at C32. K37 is a binding site for L-thyroxine. At E64 the chain carries 4-carboxyglutamate. The L-thyroxine site is built by E76 and S139.

Belongs to the transthyretin family. In terms of assembly, homotetramer. Dimer of dimers. In the homotetramer, subunits assemble around a central channel that can accommodate two ligand molecules. Interacts with RBP4. Sulfonation of the reactive cysteine Cys-32 enhances the stability of the native conformation of TTR, avoiding misassembly of the protein leading to amyloid formation. In terms of tissue distribution, detected in liver.

The protein localises to the secreted. Thyroid hormone-binding protein. Probably transports thyroxine from the bloodstream to the brain. In Macropus giganteus (Eastern gray kangaroo), this protein is Transthyretin (TTR).